Reading from the N-terminus, the 317-residue chain is MNKFKGNKVVLIGNGAVGSSYAFSLVNQSIVDELVIIDLDTEKVRGDVMDLKHATPYSPTTVRVKAGEYSDCHDADLVVICAGAAQKPGETRLDLVSKNLKIFKSIVGEVMASKFDGIFLVATNPVDILAYATWKFSGLPKERVIGSGTILDSARFRLLLSEAFDVAPRSVDAQIIGEHGDTELPVWSHANIAGQPLKTLLEQRPEGKAQIEQIFVQTRDAAYDIIQAKGATYYGVAMGLARITEAIFRNEDAVLTVSALLEGEYDEEDVYIGVPAVINRNGIRNVVEIPLNDEEQSKFAHSAKTLKDIMAEAEELK.

NAD(+) contacts are provided by residues valine 17, aspartate 38, lysine 43, tyrosine 69, and 83 to 84 (GA). Glutamine 86 and arginine 92 together coordinate substrate. NAD(+) contacts are provided by residues serine 105, 122–124 (ATN), and serine 147. 124 to 127 (NPVD) contacts substrate. 152–155 (DSAR) is a binding site for substrate. The active-site Proton acceptor is the histidine 179. Tyrosine 223 carries the phosphotyrosine modification. Substrate is bound at residue threonine 232.

Belongs to the LDH/MDH superfamily. LDH family. Homotetramer.

It localises to the cytoplasm. It carries out the reaction (S)-lactate + NAD(+) = pyruvate + NADH + H(+). It functions in the pathway fermentation; pyruvate fermentation to lactate; (S)-lactate from pyruvate: step 1/1. Its function is as follows. Catalyzes the conversion of lactate to pyruvate (Potential). Appears to be the primary factor that allows S.aureus growth during nitrosative stress in both aerobically and anaerobically cultured cells. The chain is L-lactate dehydrogenase 1 from Staphylococcus aureus (strain JH1).